The following is a 469-amino-acid chain: 3-isopropylmalate dehydratase large subunit (469 aa).

Cys347, Cys410, and Cys413 together coordinate [4Fe-4S] cluster.

The protein belongs to the aconitase/IPM isomerase family. LeuC type 1 subfamily. Heterodimer of LeuC and LeuD. Requires [4Fe-4S] cluster as cofactor.

The enzyme catalyses (2R,3S)-3-isopropylmalate = (2S)-2-isopropylmalate. Its pathway is amino-acid biosynthesis; L-leucine biosynthesis; L-leucine from 3-methyl-2-oxobutanoate: step 2/4. Its function is as follows. Catalyzes the isomerization between 2-isopropylmalate and 3-isopropylmalate, via the formation of 2-isopropylmaleate. This Burkholderia vietnamiensis (strain G4 / LMG 22486) (Burkholderia cepacia (strain R1808)) protein is 3-isopropylmalate dehydratase large subunit.